Consider the following 201-residue polypeptide: Probable nicotinate-nucleotide adenylyltransferase (201 aa).

Belongs to the NadD family.

The enzyme catalyses nicotinate beta-D-ribonucleotide + ATP + H(+) = deamido-NAD(+) + diphosphate. Its pathway is cofactor biosynthesis; NAD(+) biosynthesis; deamido-NAD(+) from nicotinate D-ribonucleotide: step 1/1. Functionally, catalyzes the reversible adenylation of nicotinate mononucleotide (NaMN) to nicotinic acid adenine dinucleotide (NaAD). This Neisseria meningitidis serogroup C / serotype 2a (strain ATCC 700532 / DSM 15464 / FAM18) protein is Probable nicotinate-nucleotide adenylyltransferase.